A 306-amino-acid chain; its full sequence is Ribonuclease Z (306 aa).

Histidine 63, histidine 65, aspartate 67, histidine 68, histidine 141, aspartate 211, and histidine 269 together coordinate Zn(2+). The active-site Proton acceptor is the aspartate 67.

This sequence belongs to the RNase Z family. As to quaternary structure, homodimer. Zn(2+) serves as cofactor.

The enzyme catalyses Endonucleolytic cleavage of RNA, removing extra 3' nucleotides from tRNA precursor, generating 3' termini of tRNAs. A 3'-hydroxy group is left at the tRNA terminus and a 5'-phosphoryl group is left at the trailer molecule.. Its function is as follows. Zinc phosphodiesterase, which displays some tRNA 3'-processing endonuclease activity. Probably involved in tRNA maturation, by removing a 3'-trailer from precursor tRNA. The chain is Ribonuclease Z from Staphylococcus epidermidis (strain ATCC 12228 / FDA PCI 1200).